An 81-amino-acid polypeptide reads, in one-letter code: uncharacterized protein (81 aa).

Residues 1 to 58 are disordered; it reads MPQSKQQFKRQGARQRDSKGKFVKARTGMATAPPAAVSTAAPTASTMTPTGSSTTATI. The segment covering 30–58 has biased composition (low complexity); that stretch reads ATAPPAAVSTAAPTASTMTPTGSSTTATI.

This is an uncharacterized protein from Caenorhabditis elegans.